A 484-amino-acid polypeptide reads, in one-letter code: uncharacterized protein (484 aa).

This is an uncharacterized protein from Orgyia pseudotsugata multicapsid polyhedrosis virus (OpMNPV).